The following is a 404-amino-acid chain: Cysteine desulfurase IscS (404 aa).

Pyridoxal 5'-phosphate-binding positions include 73–74 (AT), asparagine 153, glutamine 181, and 201–203 (SAH). Lysine 204 carries the N6-(pyridoxal phosphate)lysine modification. Threonine 241 lines the pyridoxal 5'-phosphate pocket. The active-site Cysteine persulfide intermediate is cysteine 327. Cysteine 327 serves as a coordination point for [2Fe-2S] cluster.

The protein belongs to the class-V pyridoxal-phosphate-dependent aminotransferase family. NifS/IscS subfamily. Homodimer. Forms a heterotetramer with IscU, interacts with other sulfur acceptors. The cofactor is pyridoxal 5'-phosphate.

It is found in the cytoplasm. The catalysed reaction is (sulfur carrier)-H + L-cysteine = (sulfur carrier)-SH + L-alanine. It participates in cofactor biosynthesis; iron-sulfur cluster biosynthesis. Its function is as follows. Master enzyme that delivers sulfur to a number of partners involved in Fe-S cluster assembly, tRNA modification or cofactor biosynthesis. Catalyzes the removal of elemental sulfur atoms from cysteine to produce alanine. Functions as a sulfur delivery protein for Fe-S cluster synthesis onto IscU, an Fe-S scaffold assembly protein, as well as other S acceptor proteins. This is Cysteine desulfurase IscS from Anaeromyxobacter sp. (strain Fw109-5).